A 714-amino-acid chain; its full sequence is Protein artemis (714 aa).

Disordered regions lie at residues 391 to 500 (ELFD…ESNA), 516 to 577 (ESSE…TVLI), 598 to 617 (ALLS…RWKL), and 638 to 683 (EKDA…LTPD). Positions 427 to 440 (NESTESYRANTAYT) are enriched in polar residues. Over residues 447 to 468 (VDCEESNDDDDDDDDDDKEDDS) the composition is skewed to acidic residues. Composition is skewed to polar residues over residues 484–500 (SIAS…ESNA) and 532–543 (GSQSLFSDSDGV). Residues 544–561 (SDSTHISSQNSSQSTHIS) show a composition bias toward low complexity. Positions 562-577 (EQGSQGWDSQMDTVLI) are enriched in polar residues. Composition is skewed to basic and acidic residues over residues 603–615 (DTPR…DSRW) and 660–670 (RTPDLELKRDS). Ser-670 is modified (phosphoserine; by ATM).

The protein belongs to the DNA repair metallo-beta-lactamase (DRMBL) family. In terms of assembly, interacts with PRKDC. In terms of processing, phosphorylation on undefined residues by PRKDC may stimulate endonucleolytic activity on 5' and 3' hairpins and overhangs. PRKDC must remain present, even after phosphorylation, for efficient hairpin opening.

Its subcellular location is the nucleus. In terms of biological role, required for V(D)J recombination, the process by which exons encoding the antigen-binding domains of immunoglobulins and T-cell receptor proteins are assembled from individual V, (D), and J gene segments. V(D)J recombination is initiated by the lymphoid specific RAG endonuclease complex, which generates site specific DNA double strand breaks (DSBs). These DSBs present two types of DNA end structures: hairpin sealed coding ends and phosphorylated blunt signal ends. These ends are independently repaired by the non homologous end joining (NHEJ) pathway to form coding and signal joints respectively. This protein exhibits single-strand specific 5'-3' exonuclease activity in isolation, and acquires endonucleolytic activity on 5' and 3' hairpins and overhangs when in a complex with PRKDC. The latter activity is required specifically for the resolution of closed hairpins prior to the formation of the coding joint. May also be required for the repair of complex DSBs induced by ionizing radiation, which require substantial end-processing prior to religation by NHEJ. The sequence is that of Protein artemis (DCLRE1C) from Gallus gallus (Chicken).